The chain runs to 193 residues: Crossover junction endodeoxyribonuclease RuvC (193 aa).

Residues D7, E68, and D141 contribute to the active site. Mg(2+)-binding residues include D7, E68, and D141.

Belongs to the RuvC family. Homodimer which binds Holliday junction (HJ) DNA. The HJ becomes 2-fold symmetrical on binding to RuvC with unstacked arms; it has a different conformation from HJ DNA in complex with RuvA. In the full resolvosome a probable DNA-RuvA(4)-RuvB(12)-RuvC(2) complex forms which resolves the HJ. The cofactor is Mg(2+).

The protein resides in the cytoplasm. The enzyme catalyses Endonucleolytic cleavage at a junction such as a reciprocal single-stranded crossover between two homologous DNA duplexes (Holliday junction).. The RuvA-RuvB-RuvC complex processes Holliday junction (HJ) DNA during genetic recombination and DNA repair. Endonuclease that resolves HJ intermediates. Cleaves cruciform DNA by making single-stranded nicks across the HJ at symmetrical positions within the homologous arms, yielding a 5'-phosphate and a 3'-hydroxyl group; requires a central core of homology in the junction. The consensus cleavage sequence is 5'-(A/T)TT(C/G)-3'. Cleavage occurs on the 3'-side of the TT dinucleotide at the point of strand exchange. HJ branch migration catalyzed by RuvA-RuvB allows RuvC to scan DNA until it finds its consensus sequence, where it cleaves and resolves the cruciform DNA. This is Crossover junction endodeoxyribonuclease RuvC from Renibacterium salmoninarum (strain ATCC 33209 / DSM 20767 / JCM 11484 / NBRC 15589 / NCIMB 2235).